The sequence spans 588 residues: ATP-dependent lipid A-core flippase (588 aa).

The next 6 membrane-spanning stretches (helical) occupy residues 23–43 (FWPV…IDAG), 56–76 (FITI…IGIT), 141–161 (DALT…TVMM), 162–182 (VICW…GIIV), 257–277 (LVIA…STVI), and 278–298 (TISA…IKPM). The ABC transmembrane type-1 domain maps to 28–310 (LLGVLANILY…LTTLNATIQR (283 aa)). One can recognise an ABC transporter domain in the interval 342-576 (IEFKHVYHAY…DGHYAQLYKV (235 aa)). Position 375–382 (375–382 (GHSGSGKT)) interacts with ATP.

This sequence belongs to the ABC transporter superfamily. Lipid exporter (TC 3.A.1.106) family. In terms of assembly, homodimer.

It localises to the cell inner membrane. It catalyses the reaction ATP + H2O + lipid A-core oligosaccharideSide 1 = ADP + phosphate + lipid A-core oligosaccharideSide 2.. Its function is as follows. Involved in lipopolysaccharide (LPS) biosynthesis. Translocates lipid A-core from the inner to the outer leaflet of the inner membrane. Transmembrane domains (TMD) form a pore in the inner membrane and the ATP-binding domain (NBD) is responsible for energy generation. The polypeptide is ATP-dependent lipid A-core flippase (Legionella pneumophila (strain Paris)).